Consider the following 385-residue polypeptide: Serpin-Z1 (385 aa).

Residues 317–341 (GAEAAAATADGDCGCSLDFVEPPKK) form an RCL region.

It belongs to the serpin family.

Functionally, probable serine protease inhibitor. This Arabidopsis thaliana (Mouse-ear cress) protein is Serpin-Z1.